A 475-amino-acid polypeptide reads, in one-letter code: Equilibrative nucleoside transporter 3 (475 aa).

At 1–51 (MAFASEDNVYHSSNAVYRAPSNHQEADQEALLGKLLDYPAPGLQRPEDRFN) the chain is on the cytoplasmic side. Position 21 is a phosphoserine (Ser21). The Dileucine internalization motif signature appears at 31–32 (LL). A helical membrane pass occupies residues 52 to 72 (GAYIIFFCLGIGGLLPWNFFV). The Extracellular portion of the chain corresponds to 73–105 (TAKEYWAYKLRNCSSPASGEDPEDMDILNYFES). Asn84 is a glycosylation site (N-linked (GlcNAc...) asparagine). A helical transmembrane segment spans residues 106–126 (YLAVASTVPSLLFLVANFLLV). At 127-134 (NRVQVHVR) the chain is on the cytoplasmic side. A helical transmembrane segment spans residues 135-155 (VLASLSVSLAIFVVMIVLVKV). At 156-162 (DTSSWTR) the chain is on the extracellular side. Residues 163–183 (GFFSLTIACMAIISSSSTIFN) form a helical membrane-spanning segment. At 184–199 (SSVYGLTGSFPMRNAQ) the chain is on the cytoplasmic side. Residues 200–220 (ALISGGAMGGTVSAVALLVDL) traverse the membrane as a helical segment. Over 221–230 (AASSDVRDST) the chain is Extracellular. The helical transmembrane segment at 231 to 251 (LAFFLMAAVFLGLCMGLYLLL) threads the bilayer. Residues 252–305 (SQLEYARYYMRPVAPVRVFSGEDNPSQDAPSASSVAPASRVMHTPPLGPILKKT) lie on the Cytoplasmic side of the membrane. Residues 306–326 (ASLGFCAVSLYFVTAFIIPAI) traverse the membrane as a helical segment. At 327 to 340 (STNIQSMHKGTGSP) the chain is on the extracellular side. A helical transmembrane segment spans residues 341–361 (WTSKFFVPLTVFLLFNFADLC). At 362–377 (GRQVTAWIQVPGPRSK) the chain is on the cytoplasmic side. A helical membrane pass occupies residues 378–398 (LLPGLVVSRFCLVPLFLLCNY). The Extracellular portion of the chain corresponds to 399–415 (QPRSHLTKVLFQSDIYP). A helical membrane pass occupies residues 416-436 (VLFTCLLGLSNGYLSTLVLIY). Residues 437-450 (GPKIVPRELAEATS) are Cytoplasmic-facing. The helical transmembrane segment at 451-471 (VVMLFYMSVGLMLGSACAALL) threads the bilayer. Residues 472–475 (EHFI) lie on the Extracellular side of the membrane.

Belongs to the SLC29A/ENT transporter (TC 2.A.57) family. As to expression, expressed in macrophages.

It localises to the lysosome membrane. It is found in the late endosome membrane. The protein localises to the mitochondrion membrane. Its subcellular location is the cell membrane. It carries out the reaction adenosine(in) = adenosine(out). It catalyses the reaction guanosine(in) = guanosine(out). The catalysed reaction is inosine(in) = inosine(out). The enzyme catalyses uridine(out) = uridine(in). It carries out the reaction cytidine(in) = cytidine(out). It catalyses the reaction thymidine(in) = thymidine(out). The catalysed reaction is 2'-deoxyadenosine(in) = 2'-deoxyadenosine(out). The enzyme catalyses 2'-deoxycytidine(in) = 2'-deoxycytidine(out). It carries out the reaction guanine(out) = guanine(in). It catalyses the reaction uracil(in) = uracil(out). The catalysed reaction is (R)-noradrenaline(out) = (R)-noradrenaline(in). The enzyme catalyses dopamine(out) = dopamine(in). It carries out the reaction serotonin(out) = serotonin(in). It catalyses the reaction tyramine(in) = tyramine(out). The catalysed reaction is ATP(in) = ATP(out). In terms of biological role, uniporter that mediates the facilitative transport of nucleoside across lysosomal and mitochondrial membranes. Functions as a non-electrogenic Na(+)-independent transporter. Substrate transport is pH-dependent and enhanced under acidic condition, probably reflecting the location of the transporter in acidic intracellular compartments. Proton is not a cotransporting ion but most likely change the ionization state of the transporter which dictates transport-permissible/impermissible conformation for nucleoside translocation. May direct the nucleoside transport from lysosomes to cytosol or cytosol to mitochondria to facilitate the fundamental function of salvage synthesis of nucleic acids. Involved in the transport of nucleosides (adenosine, guanosine, uridine, thymidine, cytidine and inosine) and deoxynucleosides (deoxyadenosine, deoxycytidine). Also mediates transport of purine nucleobases (adenine, guanine), and pyrimidine nucleobases (uracil). Also able to transport monoamine neurotransmitters dopamine, serotonin, noradrenaline and tyramine. Capable of transporting ATP. Mediates nucleoside export from lysosomes in macrophages, which regulates macrophage functions and numbers. This is Equilibrative nucleoside transporter 3 from Mus musculus (Mouse).